Reading from the N-terminus, the 59-residue chain is Large ribosomal subunit protein uL30 (59 aa).

The protein belongs to the universal ribosomal protein uL30 family. As to quaternary structure, part of the 50S ribosomal subunit.

This is Large ribosomal subunit protein uL30 from Staphylococcus haemolyticus (strain JCSC1435).